A 409-amino-acid polypeptide reads, in one-letter code: Phosphatidylserine decarboxylase proenzyme, mitochondrial (409 aa).

A mitochondrion-targeting transit peptide spans 1–52 (MATSVGHRCLGLLHGVAPWRSSLHPCEITALSQSLQPLRKLPFRAFRTDARK). The Mitochondrial matrix portion of the chain corresponds to 53–63 (IHTAPARTMFL). A helical transmembrane segment spans residues 64–82 (LRPVPILLATGGGYAGYRQ). Residues 83–409 (YEKYRERELE…IRFGEALGSL (327 aa)) lie on the Mitochondrial intermembrane side of the membrane. Residues aspartate 191, histidine 267, and serine 378 each act as charge relay system; for autoendoproteolytic cleavage activity in the active site. Catalysis depends on serine 378, which acts as the Schiff-base intermediate with substrate; via pyruvic acid; for decarboxylase activity. A Pyruvic acid (Ser); by autocatalysis modification is found at serine 378.

The protein belongs to the phosphatidylserine decarboxylase family. PSD-B subfamily. Eukaryotic type I sub-subfamily. Heterodimer of a large membrane-associated beta subunit and a small pyruvoyl-containing alpha subunit. It depends on pyruvate as a cofactor. Post-translationally, is synthesized initially as an inactive proenzyme. Formation of the active enzyme involves a self-maturation process in which the active site pyruvoyl group is generated from an internal serine residue via an autocatalytic post-translational modification. Two non-identical subunits are generated from the proenzyme in this reaction, and the pyruvate is formed at the N-terminus of the alpha chain, which is derived from the carboxyl end of the proenzyme. The autoendoproteolytic cleavage occurs by a canonical serine protease mechanism, in which the side chain hydroxyl group of the serine supplies its oxygen atom to form the C-terminus of the beta chain, while the remainder of the serine residue undergoes an oxidative deamination to produce ammonia and the pyruvoyl prosthetic group on the alpha chain. During this reaction, the Ser that is part of the protease active site of the proenzyme becomes the pyruvoyl prosthetic group, which constitutes an essential element of the active site of the mature decarboxylase.

It is found in the mitochondrion inner membrane. The protein resides in the lipid droplet. The protein localises to the cytoplasm. It carries out the reaction a 1,2-diacyl-sn-glycero-3-phospho-L-serine + H(+) = a 1,2-diacyl-sn-glycero-3-phosphoethanolamine + CO2. It functions in the pathway phospholipid metabolism; phosphatidylethanolamine biosynthesis. Its function is as follows. Catalyzes the formation of phosphatidylethanolamine (PtdEtn) from phosphatidylserine (PtdSer). Plays a central role in phospholipid metabolism and in the interorganelle trafficking of phosphatidylserine. May be involved in lipid droplet biogenesis at the endoplasmic reticulum membrane. This is Phosphatidylserine decarboxylase proenzyme, mitochondrial from Pongo abelii (Sumatran orangutan).